The chain runs to 204 residues: Large ribosomal subunit protein eL15 (204 aa).

Residues 161–180 form a disordered region; the sequence is MRGLTSAGKKSRGLGKGHKF. A compositionally biased stretch (basic residues) spans 169–180; the sequence is KKSRGLGKGHKF.

It belongs to the eukaryotic ribosomal protein eL15 family. In terms of assembly, component of the large ribosomal subunit.

It localises to the cytoplasm. Its function is as follows. Component of the large ribosomal subunit. The ribosome is a large ribonucleoprotein complex responsible for the synthesis of proteins in the cell. The sequence is that of Large ribosomal subunit protein eL15 (rpl15) from Ictalurus punctatus (Channel catfish).